Reading from the N-terminus, the 327-residue chain is Phosphoenolpyruvate transferase (327 aa).

Position 59 (Asp-59) interacts with 7,8-didemethyl-8-hydroxy-5-deazariboflavin.

This sequence belongs to the CofD family. As to quaternary structure, homodimer. It depends on Mg(2+) as a cofactor.

It carries out the reaction enolpyruvoyl-2-diphospho-5'-guanosine + 7,8-didemethyl-8-hydroxy-5-deazariboflavin = dehydro coenzyme F420-0 + GMP + H(+). It functions in the pathway cofactor biosynthesis; coenzyme F420 biosynthesis. In terms of biological role, catalyzes the transfer of the phosphoenolpyruvate moiety from enoylpyruvoyl-2-diphospho-5'-guanosine (EPPG) to 7,8-didemethyl-8-hydroxy-5-deazariboflavin (FO) with the formation of dehydro coenzyme F420-0 and GMP. This Mycolicibacterium smegmatis (strain ATCC 700084 / mc(2)155) (Mycobacterium smegmatis) protein is Phosphoenolpyruvate transferase.